We begin with the raw amino-acid sequence, 50 residues long: Toxic protein HokC (50 aa).

Topologically, residues 1–5 (MKQHK) are cytoplasmic. The chain crosses the membrane as a helical; Signal-anchor for type II membrane protein span at residues 6-24 (AMIVALIVICITAVVAALV). Over 25 to 50 (TRKDLCEVHIRTGQTEVAVFTAYESE) the chain is Periplasmic.

The protein belongs to the Hok/Gef family. Homodimer; disulfide-linked.

It is found in the cell inner membrane. Toxic component of a type I toxin-antitoxin (TA) system. When overexpressed kills cells within minutes; causes collapse of the transmembrane potential and arrest of respiration. Its toxic effect is probably neutralized by antisense antitoxin RNA SokC. This is Toxic protein HokC from Escherichia coli (strain K12).